Consider the following 384-residue polypeptide: Guanine nucleotide-binding protein alpha-1 subunit (384 aa).

G2 carries N-myristoyl glycine lipidation. C5 is lipidated: S-palmitoyl cysteine. The G-alpha domain maps to H38–L384. Residues K41–T54 form a G1 motif region. Residues E49, S50, G51, K52, S53, T54, D163, L188, T194, G222, N288, K289, D291, and A356 each contribute to the GTP site. S53 serves as a coordination point for Mg(2+). The G2 motif stretch occupies residues D186 to T194. A Mg(2+)-binding site is contributed by T194. Positions Y215–R224 are G3 motif. The segment at M284–D291 is G4 motif. The segment at T354–Q359 is G5 motif.

The protein belongs to the G-alpha family. In terms of assembly, g proteins are composed of 3 units; alpha, beta and gamma. The alpha chain contains the guanine nucleotide binding site. Requires Mg(2+) as cofactor.

Functionally, guanine nucleotide-binding proteins (G proteins) are involved as modulators or transducers in various transmembrane signaling systems. This Pisum sativum (Garden pea) protein is Guanine nucleotide-binding protein alpha-1 subunit (GPA1).